The chain runs to 194 residues: Probable RNA polymerase sigma factor HI_1459 (194 aa).

The Polymerase core binding motif lies at 45–58 (DLVQEAFLSAFKNL). Residues 161 to 180 (SEEICQETHLTSSNLHTTLY) constitute a DNA-binding region (H-T-H motif).

The protein belongs to the sigma-70 factor family. ECF subfamily.

This chain is Probable RNA polymerase sigma factor HI_1459, found in Haemophilus influenzae (strain ATCC 51907 / DSM 11121 / KW20 / Rd).